The following is a 529-amino-acid chain: Methionine--tRNA ligase (529 aa).

Positions 12–22 (YYVNALPHIGS) match the 'HIGH' region motif. Cys-127, Cys-130, Cys-145, and His-148 together coordinate Zn(2+). The short motif at 301–305 (KMGKS) is the 'KMSKS' region element. ATP is bound at residue Lys-304.

Belongs to the class-I aminoacyl-tRNA synthetase family. MetG type 2A subfamily. In terms of assembly, monomer. Requires Zn(2+) as cofactor.

It is found in the cytoplasm. The enzyme catalyses tRNA(Met) + L-methionine + ATP = L-methionyl-tRNA(Met) + AMP + diphosphate. Its function is as follows. Is required not only for elongation of protein synthesis but also for the initiation of all mRNA translation through initiator tRNA(fMet) aminoacylation. The protein is Methionine--tRNA ligase of Thermosynechococcus vestitus (strain NIES-2133 / IAM M-273 / BP-1).